The primary structure comprises 254 residues: 3-deoxy-manno-octulosonate cytidylyltransferase (254 aa).

Belongs to the KdsB family.

The protein localises to the cytoplasm. It carries out the reaction 3-deoxy-alpha-D-manno-oct-2-ulosonate + CTP = CMP-3-deoxy-beta-D-manno-octulosonate + diphosphate. Its pathway is nucleotide-sugar biosynthesis; CMP-3-deoxy-D-manno-octulosonate biosynthesis; CMP-3-deoxy-D-manno-octulosonate from 3-deoxy-D-manno-octulosonate and CTP: step 1/1. In terms of biological role, activates KDO (a required 8-carbon sugar) for incorporation into bacterial lipopolysaccharide in Gram-negative bacteria. The sequence is that of 3-deoxy-manno-octulosonate cytidylyltransferase from Lawsonia intracellularis (strain PHE/MN1-00).